Reading from the N-terminus, the 365-residue chain is Flagellar P-ring protein (365 aa).

The signal sequence occupies residues 1-19 (MIKFLSTFMLLLVTTVVQA).

This sequence belongs to the FlgI family. The basal body constitutes a major portion of the flagellar organelle and consists of four rings (L,P,S, and M) mounted on a central rod.

The protein resides in the periplasm. The protein localises to the bacterial flagellum basal body. Assembles around the rod to form the L-ring and probably protects the motor/basal body from shearing forces during rotation. This Escherichia fergusonii (strain ATCC 35469 / DSM 13698 / CCUG 18766 / IAM 14443 / JCM 21226 / LMG 7866 / NBRC 102419 / NCTC 12128 / CDC 0568-73) protein is Flagellar P-ring protein.